Reading from the N-terminus, the 130-residue chain is Small ribosomal subunit protein uS11 (130 aa).

The protein belongs to the universal ribosomal protein uS11 family. In terms of assembly, part of the 30S ribosomal subunit. Interacts with proteins S7 and S18. Binds to IF-3.

In terms of biological role, located on the platform of the 30S subunit, it bridges several disparate RNA helices of the 16S rRNA. Forms part of the Shine-Dalgarno cleft in the 70S ribosome. This chain is Small ribosomal subunit protein uS11, found in Prochlorococcus marinus (strain MIT 9301).